We begin with the raw amino-acid sequence, 215 residues long: Large ribosomal subunit protein uL3 (215 aa).

The interval M134–M166 is disordered.

Belongs to the universal ribosomal protein uL3 family. As to quaternary structure, part of the 50S ribosomal subunit. Forms a cluster with proteins L14 and L19.

Functionally, one of the primary rRNA binding proteins, it binds directly near the 3'-end of the 23S rRNA, where it nucleates assembly of the 50S subunit. This Gloeobacter violaceus (strain ATCC 29082 / PCC 7421) protein is Large ribosomal subunit protein uL3.